We begin with the raw amino-acid sequence, 100 residues long: A-type ATP synthase subunit F (100 aa).

This sequence belongs to the V-ATPase F subunit family. As to quaternary structure, has multiple subunits with at least A(3), B(3), C, D, E, F, H, I and proteolipid K(x).

It is found in the cell membrane. Functionally, component of the A-type ATP synthase that produces ATP from ADP in the presence of a proton gradient across the membrane. This chain is A-type ATP synthase subunit F, found in Methanocorpusculum labreanum (strain ATCC 43576 / DSM 4855 / Z).